The sequence spans 172 residues: Putative RNA polymerase II transcriptional coactivator (172 aa).

Disordered regions lie at residues 1–43 (MPPK…QDGN) and 123–172 (QTDA…DDDE). A compositionally biased stretch (polar residues) spans 24-43 (GNTGKAQPQELTKGSDQDGN). The span at 131–144 (PKVKALESNKESIK) shows a compositional bias: basic and acidic residues. The segment covering 158 to 172 (TSDEEEAAEDEDDDE) has biased composition (acidic residues).

The protein belongs to the transcriptional coactivator PC4 family.

The protein resides in the nucleus. Functionally, general coactivator that functions cooperatively with TAFs and mediates functional interactions between upstream activators and the general transcriptional machinery. Binds single-stranded DNA. This is Putative RNA polymerase II transcriptional coactivator from Neurospora crassa (strain ATCC 24698 / 74-OR23-1A / CBS 708.71 / DSM 1257 / FGSC 987).